The chain runs to 199 residues: Protein GrpE (199 aa).

The tract at residues 20–52 (YKVENEILEEETDEESQHQEPALGHPSYTALEE) is disordered.

Belongs to the GrpE family. As to quaternary structure, homodimer.

The protein resides in the cytoplasm. Participates actively in the response to hyperosmotic and heat shock by preventing the aggregation of stress-denatured proteins, in association with DnaK and GrpE. It is the nucleotide exchange factor for DnaK and may function as a thermosensor. Unfolded proteins bind initially to DnaJ; upon interaction with the DnaJ-bound protein, DnaK hydrolyzes its bound ATP, resulting in the formation of a stable complex. GrpE releases ADP from DnaK; ATP binding to DnaK triggers the release of the substrate protein, thus completing the reaction cycle. Several rounds of ATP-dependent interactions between DnaJ, DnaK and GrpE are required for fully efficient folding. The sequence is that of Protein GrpE from Legionella pneumophila (strain Corby).